We begin with the raw amino-acid sequence, 313 residues long: Protein-methionine-sulfoxide reductase catalytic subunit MsrP (313 aa).

Residues 1 to 44 (MARWRPDTAEREATPEALYLRRREFLALGAAGAVGLLLPRGARA) constitute a signal peptide (tat-type signal). Mo-molybdopterin is bound by residues asparagine 76, 79 to 80 (YE), cysteine 134, threonine 169, asparagine 217, arginine 222, and 233 to 235 (GAK).

This sequence belongs to the MsrP family. In terms of assembly, heterodimer of a catalytic subunit (MsrP) and a heme-binding subunit (MsrQ). Mo-molybdopterin is required as a cofactor. In terms of processing, predicted to be exported by the Tat system. The position of the signal peptide cleavage has not been experimentally proven.

It localises to the periplasm. It carries out the reaction L-methionyl-[protein] + a quinone + H2O = L-methionyl-(S)-S-oxide-[protein] + a quinol. The catalysed reaction is L-methionyl-[protein] + a quinone + H2O = L-methionyl-(R)-S-oxide-[protein] + a quinol. Part of the MsrPQ system that repairs oxidized periplasmic proteins containing methionine sulfoxide residues (Met-O), using respiratory chain electrons. Thus protects these proteins from oxidative-stress damage caused by reactive species of oxygen and chlorine generated by the host defense mechanisms. MsrPQ is essential for the maintenance of envelope integrity under bleach stress, rescuing a wide series of structurally unrelated periplasmic proteins from methionine oxidation. The catalytic subunit MsrP is non-stereospecific, being able to reduce both (R-) and (S-) diastereoisomers of methionine sulfoxide. The chain is Protein-methionine-sulfoxide reductase catalytic subunit MsrP from Anaeromyxobacter dehalogenans (strain 2CP-C).